Here is a 215-residue protein sequence, read N- to C-terminus: UPF0502 protein YceH (215 aa).

Lys-80 bears the N6-acetyllysine mark.

Belongs to the UPF0502 family.

The protein is UPF0502 protein YceH of Shigella sonnei (strain Ss046).